Here is a 60-residue protein sequence, read N- to C-terminus: Large ribosomal subunit protein uL30 (60 aa).

This sequence belongs to the universal ribosomal protein uL30 family. As to quaternary structure, part of the 50S ribosomal subunit.

The chain is Large ribosomal subunit protein uL30 from Verminephrobacter eiseniae (strain EF01-2).